A 3010-amino-acid chain; its full sequence is MSTNPKPQRKTKRNTNRRPQDVKFPGGGQIVGGVYLLPRRGPRLGVRATRKTSERSQPRGRRQPIPKARQPEGRAWAQPGYPWPLYGNEGLGWAGWLLSPRGSRPSWGPTDPRRRSRNLGKVIDTLTCGFADLMGYIPLVGAPLGGAARALAHGVRVLEDGVNYATGNLPGCSFSIFLLALLSCLTIPASAYEVRNVSGVYHVTNDCSNASIVYEAADMIMHTPGCVPCVRENNSSRCWVALTPTLAARNASVPTTTIRRHVDLLVGAAALCSAMYVGDLCGSVFLVAQLFTFSPRRHETVQDCNCSIYPGHVTGHRMAWDMMMNWSPTAALVVSQLLRIPQAVVDMVAGAHWGVLAGLAYYSMVGNWAKVLIVMLLFAGVDGGTYVTGGTMAKNTLGITSLFSPGSSQKIQLVNTNGSWHINRTALNCNDSLNTGFLAALFYVHKFNSSGCPERMASCSPIDAFAQGWGPITYNESHSSDQRPYCWHYAPRPCGIVPAAQVCGPVYCFTPSPVVVGTTDRFGVPTYSWGENETDVLLLNNTRPPQGNWFGCTWMNSTGFTKTCGGPPCNIGGIGNKTLTCPTDCFRKHPEATYTKCGSGPWLTPRCLVHYPYRLWHYPCTVNFTIFKVRMYVGGVEHRLEAACNWTRGERCNLEDRDRSELSPLLLSTTEWQVLPCSFTTLPALSTGLIHLHQNVVDVQYLYGIGSAVVSFAIKWEYVLLLFLLLADARVCACLWMMLLIAQAEAALENLVVLNAASVAGAHGILSFLVFFCAAWYIKGRLVPGAAYALYGVWPLLLLLLALPPRAYAMDREMAASCGGAVFVGLILLTLSPHYKLFLARLIWWLQYFITRAEAHLQVWIPPLNVRGGRDAVILLTCAIHPELIFTITKILLAILGPLMVLQAGITKVPYFVRAHGLIRACMLVRKVAGGHYVQMALMKLAALTGTYVYDHLTPLRDWAHAGLRDLAVAVEPVVFSDMETKVITWGADTAACGDIILGLPVSARRGREIHLGPADSLEGQGWRLLAPITAYSQQTRGLLGCIITSLTGRDRNQVEGEVQVVSTATQSFLATCVNGVCWTVYHGAGSKTLAGPKGPITQMYTNVDQDLVGWQAPPGARSLTPCTCGSSDLYLVTRHADVIPVRRRGDSRGSLLSPRPVSYLKGSSGGPLLCPSGHAVGIFRAAVCTRGVAKAVDFVPVESMETTMRSPVFTDNSSPPAVPQTFQVAHLHAPTGSGKSTKVPAAYAAQGYKVLVLNPSVAATLGFGAYMSKAHGIDPNIRTGVRTITTGAPITYSTYGKFLADGGCSGGAYDIIICDECHSTDSTTILGIGTVLDQAETAGARLVVLATATPPGSVTVPHPNIEEVALSSTGEIPFYGKAIPIETIKGGRHLIFCHSKKKCDELAAKLSGLGLNAVAYYRGLDVSVIPTSGDVIVVATDALMTGFTGDFDSVIDCNTCVTQTVDFSLDPTFTIETTTVPQDAVSRSQRRGRTGRGRMGIYRFVTPGERPSGMFDSSVLCECYDAGCAWYELTPAETSVRLRAYLNTPGLPVCQDHLEFWESVFTGLTHIDAHFLSQTKQAGDNFPYLVAYQATVCARAQAPPPSWDQMWKCLIRLKPTLHGPTPLLYRLGAVQNEVTTTHPITKYIMACMSADLEVVTSTWVLVGGVLAALAAYCLTTGSVVIVGRIILSGKPAIIPDREVLYREFDEMEECASHLPYIEQGMQLAEQFKQKAIGLLQTATKQAEAAAPVVESKWRTLEAFWAKHMWNFISGIQYLAGLSTLPGNPAIASLMAFTASITSPLTTQHTLLFNILGGWVAAQLAPPSAASAFVGAGIAGAAVGSIGLGKVLVDILAGYGAGVAGALVAFKVMSGEMPSTEDLVNLLPAILSPGALVVGVVCAAILRRHVGPGEGAVQWMNRLIAFASRGNHVSPTHYVPESDAAARVTQILSSLTITQLLKRLHQWINEDCSTPCSGSWLRDVWDWICTVLTDFKTWLQSKLLPRLPGVPFFSCQRGYKGVWRGDGIMQTTCPCGAQITGHVKNGSMRIVGPRTCSNTWHGTFPINAYTTGPCTPSPAPNYSRALWRVAAEEYVEVTRVGDFHYVTGMTTDNVKCPCQVPAPEFFTEVDGVRLHRYAPACKPLLREEVTFLVGLNQYLVGSQLPCEPEPDVAVLTSMLTDPSHITAETAKRRLARGSPPSLASSSASQLSAPSLKATCTTRHDSPDADLIEANLLWRQEMGGNITRVESENKVVILDSFEPLQAEEDEREVSVPAEILRRSRKFPRAMPIWARPDYNPPLLESWKDPDYVPPVVHGCPLPPAKAPPIPPPRRKRTVVLSESTVSSALAELATKTFGSSESSAVDSGTATASPDQPSDDGDAGSDVESYSSMPPLEGEPGDPDLSDGSWSTVSEEASEDVVCCSMSYTWTGALITPCAAEETKLPINALSNSLLRHHNLVYATTSRSASLRQKKVTFDRLQVLDDHYRDVLKEMKAKASTVKAKLLSVEEACKLTPPHSARSKFGYGAKDVRNLSSKAVNHIRSVWKDLLEDTETPIDTTIMAKNEVFCVQPEKGGRKPARLIVFPDLGVRVCEKMALYDVVSTLPQAVMGSSYGFQYSPGQRVEFLVNAWKAKKCPMGFAYDTRCFDSTVTENDIRVEESIYQCCDLAPEARQAIRSLTERLYIGGPLTNSKGQNCGYRRCRASGVLTTSCGNTLTCYLKAAAACRAAKLQDCTMLVCGDDLVVICESAGTQEDEASLRAFTEAMTRYSAPPGDPPKPEYDLELITSCSSNVSVAHDASGKRVYYLTRDPTTPLARAAWETARHTPVNSWLGNIIMYAPTLWARMILMTHFFSILLAQEQLEKALDCQIYGACYSIEPLDLPQIIQRLHGLSAFSLHSYSPGEINRVASCLRKLGVPPLRVWRHRARSVRARLLSQGGRAATCGKYLFNWAVRTKLKLTPIPAASQLDLSSWFVAGYSGGDIYHSLSRARPRWFMWCLLLLSVGVGIYLLPNR.

The residue at position 2 (S2) is an N-acetylserine; by host. The segment at S2–K23 is interaction with STAT1. The interaction with EIF2AK2/PKR stretch occupies residues S2–P58. Residues S2–R59 are interaction with DDX3X. The tract at residues S2 to A75 is disordered. The Cytoplasmic segment spans residues S2–N168. 2 short sequence motifs (nuclear localization signal) span residues P5–R13 and P38–R43. Basic residues predominate over residues P7 to N16. Residues G32–R47 show a composition bias toward low complexity. S53 is subject to Phosphoserine; by host. Short sequence motifs (nuclear localization signal) lie at residues P58 to P64 and P66 to P71. S99 carries the phosphoserine; by host modification. Residues P112–A152 form an important for endoplasmic reticulum and mitochondrial localization region. S116 is modified (phosphoserine; by host PKA). An interaction with APOA2 region spans residues V122–S173. The interval Y164–G167 is important for lipid droplets localization. A helical membrane pass occupies residues L169–A189. A propeptide spans L178–A191 (ER anchor for the core protein, removed in mature form by host signal peptidase). Topologically, residues S190–G358 are lumenal. Residues N196, N209, N234, and N250 are each glycosylated (N-linked (GlcNAc...) asparagine; by host). The segment at L265–R296 is important for fusion. Residue N305 is glycosylated (N-linked (GlcNAc...) asparagine; by host). The helical transmembrane segment at L359–A379 threads the bilayer. The Lumenal portion of the chain corresponds to G380 to L725. The segment at T385 to I411 is HVR1. The N-linked (GlcNAc...) asparagine; by host glycan is linked to N417. 3 N-linked (GlcNAc...) (high mannose) asparagine; by host glycosylation sites follow: N423, N430, and N448. Disulfide bonds link C429/C552, C452/C459, C486/C494, and C503/C508. An HVR2 region spans residues Y474 to Q482. The segment at S480 to P493 is CD81-binding 1. An N-linked (GlcNAc...) (high mannose) asparagine; by host glycan is attached at N532. The CD81-binding 2 stretch occupies residues P544 to G551. N556 is a glycosylation site (N-linked (GlcNAc...) (high mannose) asparagine; by host). C564 and C569 are disulfide-bonded. N-linked (GlcNAc...) (high mannose) asparagine; by host glycosylation is present at N576. 3 disulfides stabilise this stretch: C581–C585, C597–C620, and C607–C644. 2 N-linked (GlcNAc...) (high mannose) asparagine; by host glycosylation sites follow: N623 and N645. C652 and C677 form a disulfide bridge. Positions S660–E671 are EIF2AK2/eIF2-alpha phosphorylation homology domain (PePHD). Residues L726–A746 traverse the membrane as a helical segment. Residues A747–A757 are Lumenal-facing. A helical transmembrane segment spans residues S758 to I778. The Cytoplasmic portion of the chain corresponds to K779–R781. The chain crosses the membrane as a helical span at residues L782 to L803. The Lumenal segment spans residues P804 to E813. Residues M814–H834 traverse the membrane as a helical segment. The Cytoplasmic segment spans residues Y835–F838. The chain crosses the membrane as a helical span at residues L839–V859. Over W860–H881 the chain is Lumenal. Residues P882 to L902 form a helical membrane-spanning segment. One can recognise a Peptidase C18 domain in the interval Q903 to L1026. Residues Q903–T1657 are Cytoplasmic-facing. A protease NS2-3 region spans residues A904–R1206. C922 carries S-palmitoyl cysteine; by host lipidation. Residues A929 to V949 are interaction with host SCPS1. Catalysis depends on for protease NS2 activity; shared with dimeric partner residues H952, E972, and C993. In terms of domain architecture, Peptidase S29 spans A1027 to P1208. Residues H1083 and D1107 each act as charge relay system; for serine protease NS3 activity in the active site. Zn(2+) contacts are provided by C1123 and C1125. The Charge relay system; for serine protease NS3 activity role is filled by S1165. Residues C1171 and H1175 each coordinate Zn(2+). The Helicase ATP-binding domain occupies P1217–S1369. A1230–S1237 is an ATP binding site. Residues S1237 and E1317 each coordinate Mg(2+). Positions D1316–H1319 match the DECH box motif. The interval Q1486–G1497 is RNA-binding. Residues S1658–G1678 form a helical membrane-spanning segment. The tract at residues S1679–G1690 is NS3-binding. The Cytoplasmic segment spans residues S1679–H1805. Residues T1806–A1826 traverse the membrane as a helical segment. Topologically, residues S1827–A1828 are lumenal. Residues F1829–V1849 form a helical membrane-spanning segment. Residues G1833–G1861 form a glycine zipper region. A topological domain (cytoplasmic) is located at residue D1850. A helical membrane pass occupies residues I1851–G1871. Residues E1872 to N1881 are Lumenal-facing. Residues L1882–L1902 form a helical membrane-spanning segment. The Cytoplasmic segment spans residues R1903 to C1972. 2 S-palmitoyl cysteine; by host lipidation sites follow: C1968 and C1972. Residues S1973–L2003 lie within the membrane without spanning it. A membrane-binding region spans residues R1978 to K1998. Residues P2004–R2989 are Cytoplasmic-facing. The tract at residues G2005–S2221 is RNA-binding. Residues C2011, C2029, C2031, and C2052 each coordinate Zn(2+). Positions E2120 to A2208 are FKBP8-binding. The tract at residues E2120 to T2332 is transcriptional activation. An interaction with non-structural protein 4A region spans residues P2135–P2139. The disordered stretch occupies residues K2187–H2219. The segment at R2189–P2441 is interaction with host SKP2. Position 2194 is a phosphoserine; by host; in p56 (S2194). The span at S2194–L2211 shows a compositional bias: low complexity. At S2197 the chain carries Phosphoserine; by host; in p58. S2201 carries the post-translational modification Phosphoserine; by host; in p56 and p58, regulates intracellular NS5A distribution. 3 positions are modified to phosphoserine; by host; in p58: S2204, S2207, and S2210. ISDR regions lie at residues L2206–E2245 and S2210–K2249. Residues S2210–L2275 are EIF2AK2/PKR-binding. An NS4B-binding region spans residues K2249–Y2306. The SH3-binding motif lies at P2322–P2325. A Nuclear localization signal motif is present at residues P2326–V2334. The segment at T2332–P2441 is interaction with host IFI27. K2350 participates in a covalent cross-link: Glycyl lysine isopeptide (Lys-Gly) (interchain with G-Cter in ubiquitin). The span at T2351–Q2371 shows a compositional bias: polar residues. The segment at T2351–T2407 is disordered. The segment at S2354–D2377 is V3. A phosphoserine; by host mark is found at S2448 and S2461. The 119-residue stretch at P2633–D2751 folds into the RdRp catalytic domain. The Mg(2+) site is built by D2639, D2737, and D2738. The helical transmembrane segment at W2990–R3010 threads the bilayer.

It belongs to the hepacivirus polyprotein family. Homooligomer. Interacts with E1 (via C-terminus). Interacts with the non-structural protein 5A. Interacts (via N-terminus) with host STAT1 (via SH2 domain); this interaction results in decreased STAT1 phosphorylation and ubiquitin-mediated proteasome-dependent STAT1 degradation, leading to decreased IFN-stimulated gene transcription. Interacts with host STAT3; this interaction constitutively activates STAT3. Interacts with host LTBR receptor. Interacts with host TNFRSF1A receptor and possibly induces apoptosis. Interacts with host HNRPK. Interacts with host YWHAE. Interacts with host UBE3A/E6AP. Interacts with host DDX3X. Interacts with host APOA2. Interacts with host RXRA protein. Interacts with host SP110 isoform 3/Sp110b; this interaction sequesters the transcriptional corepressor SP110 away from the nucleus. Interacts with host CREB3 nuclear transcription protein; this interaction triggers cell transformation. Interacts with host ACY3. Interacts with host C1QR1. Interacts with host RBM24; this interaction, which enhances the interaction of the mature core protein with 5'-UTR, may inhibit viral translation and favor replication. Interacts with host EIF2AK2/PKR; this interaction induces the autophosphorylation of EIF2AK2. Part of the viral assembly initiation complex composed of NS2, E1, E2, NS3, NS4A, NS5A and the mature core protein. As to quaternary structure, forms a heterodimer with envelope glycoprotein E2. Interacts with mature core protein. Interacts with protease NS2. The heterodimer E1/E2 interacts with host CLDN1; this interaction plays a role in viral entry into host cell. Interacts with host SPSB2 (via C-terminus). Part of the viral assembly initiation complex composed of NS2, E1, E2, NS3, NS4A, NS5A and the mature core protein. Interacts with human PLSCR1. Interacts with host NEURL3; this interaction prevents E1 binding to glycoprotein E2. In terms of assembly, forms a heterodimer with envelope glycoprotein E1. Interacts with host CD81 and SCARB1 receptors; these interactions play a role in viral entry into host cell. Interacts with host EIF2AK2/PKR; this interaction inhibits EIF2AK2 and probably allows the virus to evade the innate immune response. Interacts with host CD209/DC-SIGN and CLEC4M/DC-SIGNR. Interact with host SPCS1; this interaction is essential for viral particle assembly. Interacts with protease NS2. The heterodimer E1/E2 interacts with host CLDN1; this interaction plays a role in viral entry into host cell. Part of the viral assembly initiation complex composed of NS2, E1, E2, NS3, NS4A, NS5A and the mature core protein. Interacts with host SLC3A2/4F2hc; the interaction may facilitate viral entry into host cell. Interacts with human PLSCR1. Homohexamer. Homoheptamer. Interacts with protease NS2. As to quaternary structure, homodimer. Interacts with host SPCS1; this interaction is essential for viral particle assembly. Interacts with envelope glycoprotein E1. Interacts with envelope glycoprotein E2. Interacts with viroporin p7. Interacts with serine protease/helicase NS3. Part of the replication complex composed of NS2, NS3, NS4A, NS4B, NS5A and the RNA-directed RNA polymerase embedded in an ER-derived membranous web. Part of the viral assembly initiation complex composed of NS2, E1, E2, NS3, NS4A, NS5A and the mature core protein. In terms of assembly, interacts with protease NS2. Interacts with non-structural protein 4A; this interaction stabilizes the folding of NS3 serine protease. NS3-NS4A interaction is essential for NS3 activation and allows membrane anchorage of the latter. NS3/NS4A complex also prevents phosphorylation of host IRF3, thus preventing the establishment of dsRNA induced antiviral state. Interacts with host MAVS; this interaction leads to the cleavage and inhibition of host MAVS. Interacts with host TICAM1; this interaction leads to the cleavage and inhibition of host TICAM1. Interacts with host TANK-binding kinase/TBK1; this interaction results in the inhibition of the association between TBK1 and IRF3, which leads to the inhibition of IRF3 activation. Interacts with host RBM24. Part of the replication complex composed of NS2, NS3, NS4A, NS4B, NS5A and the RNA-directed RNA polymerase embedded in an ER-derived membranous web. Part of the viral assembly initiation complex composed of NS2, E1, E2, NS3, NS4A, NS5A and the mature core protein. Monomer. Homodimer; dimerization is required for RNA-binding. Interacts with the mature core protein. Interacts with host GRB2. Interacts with host BIN1. Interacts with host PIK3R1. Interacts with host SRCAP. Interacts with host FKBP8. Interacts with host VAPB. Interacts with host EIF2AK2/PKR; this interaction leads to disruption of EIF2AK2 dimerization by NS5A and probably allows the virus to evade the innate immune response. Interacts (via N-terminus) with host PACSIN2 (via N-terminus); this interaction attenuates protein kinase C alpha-mediated phosphorylation of PACSIN2 by disrupting the interaction between PACSIN2 and PRKCA. Interacts (via N-terminus) with host SRC kinase (via SH2 domain). Interacts with most Src-family kinases. Interacts with host IFI27 and SKP2; promotes the ubiquitin-mediated proteasomal degradation of NS5A. Interacts (via N-terminus) with non-structural protein 4A. Interacts with non-structural protein 4B. Interacts with RNA-directed RNA polymerase. Part of the replication complex composed of NS2, NS3, NS4A, NS4B, NS5A and the RNA-directed RNA polymerase embedded in an ER-derived membranous web. Interacts with host GPS2. Interacts with host TNFRSF21; this interaction allows the modulation by the virus of JNK, p38 MAPK, STAT3, and Akt signaling pathways in a DR6-dependent manner. Interacts (via N-terminus) with host CIDEB (via N-terminus); this interaction seems to regulate the association of HCV particles with APOE. Interacts with host CHKA/Choline Kinase-alpha; CHKA bridges host PI4KA and NS5A and potentiates NS5A-stimulated PI4KA activity, which then facilitates the targeting of the ternary complex to the ER for viral replication. Interacts with host SPSB2 (via C-terminus); this interaction targets NS5A for ubiquitination and degradation. Part of the viral assembly initiation complex composed of NS2, E1, E2, NS3, NS4A, NS5A and the mature core protein. Zn(2+) is required as a cofactor. It depends on Mg(2+) as a cofactor. Specific enzymatic cleavages in vivo yield mature proteins. The structural proteins, core, E1, E2 and p7 are produced by proteolytic processing by host signal peptidases. The core protein precursor is synthesized as a 23 kDa, which is retained in the ER membrane through the hydrophobic signal peptide. Cleavage by the signal peptidase releases the 21 kDa mature core protein. The cleavage of the core protein precursor occurs between aminoacids 176 and 188 but the exact cleavage site is not known. Some degraded forms of the core protein appear as well during the course of infection. The other proteins (p7, NS2, NS3, NS4A, NS4B, NS5A and NS5B) are cleaved by the viral proteases. Autoprocessing between NS2 and NS3 is mediated by the NS2 cysteine protease catalytic domain and regulated by the NS3 N-terminal domain. In terms of processing, phosphorylated by host PKC and PKA. Post-translationally, ubiquitinated; mediated by UBE3A and leading to core protein subsequent proteasomal degradation. Highly N-glycosylated. In terms of processing, palmitoylation is required for NS2/3 autoprocessing and E2 recruitment to membranes. Post-translationally, palmitoylated. This modification may play a role in its polymerization or in protein-protein interactions. Cleaved by host caspases which are probably activated by the viral infection. In terms of processing, ubiquitinated. Ubiquitination, most probably at Lys-2350, mediated by host IFI27 and SKP2 leads to proteasomal degradation, restricting viral infection. Ubiquitination by host TRIM22 leads to interruption of viral replication. Post-translationally, phosphorylated on serines in a basal form termed p56. p58 is a hyperphosphorylated form of p56. p56 and p58 coexist in the cell in roughly equivalent amounts. Hyperphosphorylation is dependent on the presence of NS4A. Host CSNK1A1/CKI-alpha or RPS6KB1 kinases may be responsible for NS5A phosphorylation. Tyrosine phosphorylation is essential for the interaction with host SRC. In terms of processing, the N-terminus is phosphorylated by host PRK2/PKN2.

The protein localises to the host endoplasmic reticulum membrane. It localises to the host mitochondrion membrane. It is found in the virion. The protein resides in the host cytoplasm. Its subcellular location is the host nucleus. The protein localises to the host lipid droplet. It localises to the virion membrane. It is found in the host mitochondrion. The protein resides in the host cell membrane. Its subcellular location is the host perinuclear region. The catalysed reaction is Hydrolysis of four peptide bonds in the viral precursor polyprotein, commonly with Asp or Glu in the P6 position, Cys or Thr in P1 and Ser or Ala in P1'.. It carries out the reaction a ribonucleoside 5'-triphosphate + H2O = a ribonucleoside 5'-diphosphate + phosphate + H(+). The enzyme catalyses ATP + H2O = ADP + phosphate + H(+). It catalyses the reaction RNA(n) + a ribonucleoside 5'-triphosphate = RNA(n+1) + diphosphate. Its activity is regulated as follows. Inhibited by the antiviral drug hexamethylene amiloride. Inhibition by amantadine appears to be genotype-dependent. Also inhibited by long-alkyl-chain iminosugar derivatives. With respect to regulation, activity is up-regulated by PRK2/PKN2-mediated phosphorylation. Its function is as follows. Packages viral RNA to form a viral nucleocapsid, and promotes virion budding. Participates in the viral particle production as a result of its interaction with the non-structural protein 5A. Binds RNA and may function as a RNA chaperone to induce the RNA structural rearrangements taking place during virus replication. Modulates viral translation initiation by interacting with viral IRES and 40S ribosomal subunit. Affects various cell signaling pathways, host immunity and lipid metabolism. Prevents the establishment of cellular antiviral state by blocking the interferon-alpha/beta (IFN-alpha/beta) and IFN-gamma signaling pathways and by blocking the formation of phosphorylated STAT1 and promoting ubiquitin-mediated proteasome-dependent degradation of STAT1. Activates STAT3 leading to cellular transformation. Regulates the activity of cellular genes, including c-myc and c-fos. May repress the promoter of p53, and sequester CREB3 and SP110 isoform 3/Sp110b in the cytoplasm. Represses cell cycle negative regulating factor CDKN1A, thereby interrupting an important check point of normal cell cycle regulation. Targets transcription factors involved in the regulation of inflammatory responses and in the immune response: suppresses NF-kappa-B activation, and activates AP-1. Binds to dendritic cells (DCs) via C1QR1, resulting in down-regulation of T-lymphocytes proliferation. Alters lipid metabolism by interacting with hepatocellular proteins involved in lipid accumulation and storage. Induces up-regulation of FAS promoter activity, and thereby contributes to the increased triglyceride accumulation in hepatocytes (steatosis). Functionally, forms a heterodimer with envelope glycoprotein E2, which mediates virus attachment to the host cell, virion internalization through clathrin-dependent endocytosis and fusion with host membrane. Fusion with the host cell is most likely mediated by both E1 and E2, through conformational rearrangements of the heterodimer required for fusion rather than a classical class II fusion mechanism. E1/E2 heterodimer binds host apolipoproteins such as APOB and APOE thereby forming a lipo-viro-particle (LVP). APOE associated to the LVP allows the initial virus attachment to cell surface receptors such as the heparan sulfate proteoglycans (HSPGs), syndecan-1 (SDC1), syndecan-1 (SDC2), the low-density lipoprotein receptor (LDLR) and scavenger receptor class B type I (SCARB1). The cholesterol transfer activity of SCARB1 allows E2 exposure and binding of E2 to SCARB1 and the tetraspanin CD81. E1/E2 heterodimer binding on CD81 activates the epithelial growth factor receptor (EGFR) signaling pathway. Diffusion of the complex E1-E2-EGFR-SCARB1-CD81 to the cell lateral membrane allows further interaction with Claudin 1 (CLDN1) and occludin (OCLN) to finally trigger HCV entry. Forms a heterodimer with envelope glycoprotein E1, which mediates virus attachment to the host cell, virion internalization through clathrin-dependent endocytosis and fusion with host membrane. Fusion with the host cell is most likely mediated by both E1 and E2, through conformational rearrangements of the heterodimer required for fusion rather than a classical class II fusion mechanism. The interaction between envelope glycoprotein E2 and host apolipoprotein E/APOE allows the proper assembly, maturation and infectivity of the viral particles. This interaction is probably promoted via the up-regulation of cellular autophagy by the virus. E1/E2 heterodimer binds host apolipoproteins such as APOB and APOE thereby forming a lipo-viro-particle (LVP). APOE associated to the LVP allows the initial virus attachment to cell surface receptors such as the heparan sulfate proteoglycans (HSPGs), syndecan-1 (SDC1), syndecan-1 (SDC2), the low-density lipoprotein receptor (LDLR) and scavenger receptor class B type I (SCARB1). The cholesterol transfer activity of SCARB1 allows E2 exposure and binding of E2 to SCARB1 and the tetraspanin CD81. E1/E2 heterodimer binding on CD81 activates the epithelial growth factor receptor (EGFR) signaling pathway. Diffusion of the complex E1-E2-EGFR-SCARB1-CD81 to the cell lateral membrane allows further interaction with Claudin 1 (CLDN1) and occludin (OCLN) to finally trigger HCV entry. Inhibits host EIF2AK2/PKR activation, preventing the establishment of an antiviral state. Viral ligand for CD209/DC-SIGN and CLEC4M/DC-SIGNR, which are respectively found on dendritic cells (DCs), and on liver sinusoidal endothelial cells and macrophage-like cells of lymph node sinuses. These interactions allow the capture of circulating HCV particles by these cells and subsequent facilitated transmission to permissive cells such as hepatocytes and lymphocyte subpopulations. The interaction between E2 and host amino acid transporter complex formed by SLC3A2 and SLC7A5/LAT1 may facilitate viral entry into host cell. In terms of biological role, ion channel protein that acts as a viroporin and plays an essential role in the assembly, envelopment and secretion of viral particles. Regulates the host cell secretory pathway, which induces the intracellular retention of viral glycoproteins and favors assembly of viral particles. Creates a pore in acidic organelles and releases Ca(2+) and H(+) in the cytoplasm of infected cells, leading to a productive viral infection. High levels of cytoplasmic Ca(2+) may trigger membrane trafficking and transport of viral ER-associated proteins to viroplasms, sites of viral genome replication. This ionic imbalance induces the assembly of the inflammasome complex, which triggers the maturation of pro-IL-1beta into IL-1beta through the action of caspase-1. Targets also host mitochondria and induces mitochondrial depolarization. In addition of its role as a viroporin, acts as a lipid raft adhesion factor. Its function is as follows. Cysteine protease required for the proteolytic auto-cleavage between the non-structural proteins NS2 and NS3. The N-terminus of NS3 is required for the function of NS2 protease (active region NS2-3). Promotes the initiation of viral particle assembly by mediating the interaction between structural and non-structural proteins. Functionally, displays three enzymatic activities: serine protease with a chymotrypsin-like fold, NTPase and RNA helicase. NS3 serine protease, in association with NS4A, is responsible for the cleavages of NS3-NS4A, NS4A-NS4B, NS4B-NS5A and NS5A-NS5B. The NS3/NS4A complex prevents phosphorylation of host IRF3, thus preventing the establishment of dsRNA induced antiviral state. The NS3/NS4A complex induces host amino acid transporter component SLC3A2, thus contributing to HCV propagation. NS3 RNA helicase binds to RNA and unwinds both dsDNA and dsRNA in the 3' to 5' direction, and likely resolves RNA complicated stable secondary structures in the template strand. Binds a single ATP and catalyzes the unzipping of a single base pair of dsRNA. Inhibits host antiviral proteins TBK1 and IRF3 thereby preventing the establishment of an antiviral state. Cleaves host MAVS/CARDIF thereby preventing the establishment of an antiviral state. Cleaves host TICAM1/TRIF, thereby disrupting TLR3 signaling and preventing the establishment of an antiviral state. Peptide cofactor which forms a non-covalent complex with the N-terminal of NS3 serine protease. The NS3/NS4A complex prevents phosphorylation of host IRF3, thus preventing the establishment of dsRNA induced antiviral state. The NS3/NS4A complex induces host amino acid transporter component SLC3A2, thus contributing to HCV propagation. In terms of biological role, induces a specific membrane alteration that serves as a scaffold for the virus replication complex. This membrane alteration gives rise to the so-called ER-derived membranous web that contains the replication complex. NS4B self-interaction contributes to its function in membranous web formation. Promotes host TRIF protein degradation in a CASP8-dependent manner thereby inhibiting host TLR3-mediated interferon signaling. Disrupts the interaction between STING and TBK1 contributing to the inhibition of interferon signaling. Its function is as follows. Phosphorylated protein that is indispensable for viral replication and assembly. Both hypo- and hyperphosphorylated states are required for the viral life cycle. The hyperphosphorylated form of NS5A is an inhibitor of viral replication. Involved in RNA-binding and especially in binding to the viral genome. Zinc is essential for RNA-binding. Participates in the viral particle production as a result of its interaction with the viral mature core protein. Its interaction with host VAPB may target the viral replication complex to vesicles. Down-regulates viral IRES translation initiation. Mediates interferon resistance, presumably by interacting with and inhibiting host EIF2AK2/PKR. Prevents BIN1-induced apoptosis. Acts as a transcriptional activator of some host genes important for viral replication when localized in the nucleus. Via the interaction with host PACSIN2, modulates lipid droplet formation in order to promote virion assembly. Modulates TNFRSF21/DR6 signaling pathway for viral propagation. Functionally, RNA-dependent RNA polymerase that performs primer-template recognition and RNA synthesis during viral replication. Initiates RNA transcription/replication at a flavin adenine dinucleotide (FAD), resulting in a 5'- FAD cap on viral RNAs. In this way, recognition of viral 5' RNA by host pattern recognition receptors can be bypassed, thereby evading activation of antiviral pathways. This chain is Genome polyprotein, found in Hepatitis C virus genotype 1b (isolate Con1) (HCV).